A 121-amino-acid polypeptide reads, in one-letter code: Probable V-type proton ATPase subunit F (121 aa).

It belongs to the V-ATPase F subunit family. As to quaternary structure, V-ATPase is a heteromultimeric enzyme made up of two complexes: the ATP-hydrolytic V1 complex and the proton translocation V0 complex. The V1 complex consists of three catalytic AB heterodimers that form a heterohexamer, three peripheral stalks each consisting of EG heterodimers, one central rotor including subunits D and F, and the regulatory subunits C and H. The proton translocation complex V0 consists of the proton transport subunit a, a ring of proteolipid subunits c9c'', rotary subunit d, subunits e and f, and the accessory subunits vah-19/Ac45 and vah-20/PRR.

Its function is as follows. Subunit of the V1 complex of vacuolar(H+)-ATPase (V-ATPase), a multisubunit enzyme composed of a peripheral complex (V1) that hydrolyzes ATP and a membrane integral complex (V0) that translocates protons. V-ATPase is responsible for acidifying and maintaining the pH of intracellular compartments and in some cell types, is targeted to the plasma membrane, where it is responsible for acidifying the extracellular environment. Required along with other vacuolar ATPase components for the removal of protein aggregates which form in immature oocytes in the distal gonad. This removal occurs as the oocytes mature and move to the proximal gonad, is triggered by the introduction of sperm through mating and occurs before fertilization. The introduction of sperm triggers V-ATPase accumulation in proximal oocytes and induces lysosomal acidification which leads to engulfing of protein aggregates by lysosomes and subsequent clearance of the aggregates. Lysosomal acidification also leads to changes in mitochondrial morphology and function. Mitochondria in distal immature oocytes are fragmented, produce high levels of reactive oxygen species (ROS) and have high membrane potential, indicative of metabolic inactivity. In contrast, mitochondria in proximal mature oocytes are tubular with lower ROS levels and membrane potential, indicative of an active metabolic state required for aggregate mobilization before clearance. The protein is Probable V-type proton ATPase subunit F of Caenorhabditis elegans.